Consider the following 571-residue polypeptide: Methionine--tRNA ligase (571 aa).

Residues 10 to 20 carry the 'HIGH' region motif; sequence PYVNAVPHLGN. Zn(2+)-binding residues include C143, C146, C156, and C159. A 'KMSKS' region motif is present at residues 333 to 337; sequence KFSKS. K336 lines the ATP pocket.

This sequence belongs to the class-I aminoacyl-tRNA synthetase family. MetG type 1 subfamily. It depends on Zn(2+) as a cofactor.

It localises to the cytoplasm. The enzyme catalyses tRNA(Met) + L-methionine + ATP = L-methionyl-tRNA(Met) + AMP + diphosphate. Its function is as follows. Is required not only for elongation of protein synthesis but also for the initiation of all mRNA translation through initiator tRNA(fMet) aminoacylation. The polypeptide is Methionine--tRNA ligase (Sulfolobus acidocaldarius (strain ATCC 33909 / DSM 639 / JCM 8929 / NBRC 15157 / NCIMB 11770)).